The chain runs to 349 residues: MADLAELWEKVSSNKDSKSLLKKHLTKEVYEKLKDKKTKFGGTLADCIRSGAKNLDSGVGVYASDPEAYTVFQDLLGPVILDYHKITELKHPACDFGDLSNLGFGDFDPSGDWIVSTRVRVGRSHASFGFPPTLNKEQRVEMQRVTQGALEGLTGELKGKYYPLEGMTPDVQKQLTEDHFLFNDSDRFLKAASGYDDWPTGRGIFFNDNKTFLVWVNEEDHIRIISMQKGGDLAAVYKRLVGGIKELEKKLEFARLPNLGYLTFCPSNLGTTLRASVHIKIPKVAKKPEFKEICDKLNLQARGIHGEHTESVGGVYDISNKRRMGLSEIEAIQEMRKGVEEIIKLEKAA.

Residues 3–85 (DLAELWEKVS…LGPVILDYHK (83 aa)) enclose the Phosphagen kinase N-terminal domain. Substrate is bound at residue 58–62 (GVGVY). The 237-residue stretch at 113–349 (WIVSTRVRVG…EEIIKLEKAA (237 aa)) folds into the Phosphagen kinase C-terminal domain. Residues 116–120 (STRVR) and His-179 contribute to the ATP site. Glu-219 is a binding site for substrate. Arg-223 serves as a coordination point for ATP. Residue Cys-265 coordinates substrate. ATP contacts are provided by residues 274–278 (RASVH) and 302–307 (RGIHGE). Glu-307 serves as a coordination point for substrate.

This sequence belongs to the ATP:guanido phosphotransferase family.

It carries out the reaction L-arginine + ATP = N(omega)-phospho-L-arginine + ADP + H(+). The polypeptide is Arginine kinase (Liolophura japonica (Chiton)).